The primary structure comprises 141 residues: HTH-type transcriptional repressor NsrR (141 aa).

An HTH rrf2-type domain is found at 2 to 129 (QLTNFTDFGL…DKHTIQDMLT (128 aa)). Residues 28-51 (ITVVTETFDVSRNHMVKIINKLGQ) constitute a DNA-binding region (H-T-H motif). 3 residues coordinate [2Fe-2S] cluster: Cys91, Cys96, and Cys102.

[2Fe-2S] cluster is required as a cofactor.

Functionally, nitric oxide-sensitive repressor of genes involved in protecting the cell against nitrosative stress. May require iron for activity. This Aliivibrio fischeri (strain ATCC 700601 / ES114) (Vibrio fischeri) protein is HTH-type transcriptional repressor NsrR.